Reading from the N-terminus, the 258-residue chain is Snake venom serine protease KN13 (258 aa).

Residues 1–18 form the signal peptide; it reads MVLIRVLANLLILQLSYA. A propeptide spanning residues 19-24 is cleaved from the precursor; sequence QRSSEL. Residues 25 to 249 form the Peptidase S1 domain; the sequence is VIGGDECNIN…HLDWIQNIIA (225 aa). 6 cysteine pairs are disulfide-bonded: Cys-31-Cys-163, Cys-50-Cys-66, Cys-98-Cys-256, Cys-142-Cys-210, Cys-174-Cys-189, and Cys-200-Cys-225. Catalysis depends on His-65, which acts as the Charge relay system. N-linked (GlcNAc...) asparagine glycosylation is present at Asn-103. The active-site Charge relay system is Asp-110. 4 N-linked (GlcNAc...) asparagine glycosylation sites follow: Asn-121, Asn-122, Asn-154, and Asn-170. Catalysis depends on Ser-204, which acts as the Charge relay system. Asn-251 carries an N-linked (GlcNAc...) asparagine glycan.

It belongs to the peptidase S1 family. Snake venom subfamily. In terms of assembly, monomer. In terms of tissue distribution, expressed by the venom gland.

It is found in the secreted. Snake venom serine protease that may act in the hemostasis system of the prey. This chain is Snake venom serine protease KN13, found in Trimeresurus stejnegeri (Chinese green tree viper).